Consider the following 240-residue polypeptide: Mediator of RNA polymerase II transcription subunit 19 (240 aa).

2 disordered regions span residues 32-58 (GKTQ…DNSR) and 169-240 (QPPK…SGLR). Basic residues-rich tracts occupy residues 170-181 (PPKKKNKKHKQS) and 212-224 (RKKK…KKSR).

It belongs to the Mediator complex subunit 19 family. In terms of assembly, component of the Mediator complex.

The protein localises to the nucleus. Its function is as follows. Component of the Mediator complex, a coactivator involved in the regulated transcription of nearly all RNA polymerase II-dependent genes. Mediator functions as a bridge to convey information from gene-specific regulatory proteins to the basal RNA polymerase II transcription machinery. Mediator is recruited to promoters by direct interactions with regulatory proteins and serves as a scaffold for the assembly of a functional preinitiation complex with RNA polymerase II and the general transcription factors. This Xenopus laevis (African clawed frog) protein is Mediator of RNA polymerase II transcription subunit 19 (med19).